A 405-amino-acid chain; its full sequence is Deoxyguanosinetriphosphate triphosphohydrolase-like protein (405 aa).

One can recognise an HD domain in the interval 75-219 (RLTHTIEVAQ…AAIADDIAYN (145 aa)).

It belongs to the dGTPase family. Type 2 subfamily.

The chain is Deoxyguanosinetriphosphate triphosphohydrolase-like protein from Rhizobium johnstonii (strain DSM 114642 / LMG 32736 / 3841) (Rhizobium leguminosarum bv. viciae).